The sequence spans 127 residues: Ribonuclease P protein component (127 aa).

This sequence belongs to the RnpA family. As to quaternary structure, consists of a catalytic RNA component (M1 or rnpB) and a protein subunit.

The enzyme catalyses Endonucleolytic cleavage of RNA, removing 5'-extranucleotides from tRNA precursor.. In terms of biological role, RNaseP catalyzes the removal of the 5'-leader sequence from pre-tRNA to produce the mature 5'-terminus. It can also cleave other RNA substrates such as 4.5S RNA. The protein component plays an auxiliary but essential role in vivo by binding to the 5'-leader sequence and broadening the substrate specificity of the ribozyme. The protein is Ribonuclease P protein component of Corynebacterium urealyticum (strain ATCC 43042 / DSM 7109).